We begin with the raw amino-acid sequence, 95 residues long: Large ribosomal subunit protein bL25 (95 aa).

It belongs to the bacterial ribosomal protein bL25 family. As to quaternary structure, part of the 50S ribosomal subunit; part of the 5S rRNA/L5/L18/L25 subcomplex. Contacts the 5S rRNA. Binds to the 5S rRNA independently of L5 and L18.

Its function is as follows. This is one of the proteins that binds to the 5S RNA in the ribosome where it forms part of the central protuberance. This Shewanella loihica (strain ATCC BAA-1088 / PV-4) protein is Large ribosomal subunit protein bL25.